Reading from the N-terminus, the 211-residue chain is Beta-crystallin B3 (211 aa).

Position 1 is an N-acetylmethionine (M1). Position 2 is an N-acetylalanine; in Beta-crystallin B3, N-terminally processed (A2). Residues 2–23 (AEQHGAPEQAAAGKSHGGLGGS) are N-terminal arm. 2 consecutive Beta/gamma crystallin 'Greek key' domains span residues 24–63 (YKVTVYELENFQGKRCELSAECPNLTDSLLEKVGSIQVES) and 64–108 (GPWL…RPLH). The connecting peptide stretch occupies residues 109–113 (IDGPD). 2 Beta/gamma crystallin 'Greek key' domains span residues 114 to 155 (HKLH…RVIN) and 156 to 198 (GTWV…RRIR). The tract at residues 200–211 (QKWHKRGCFLSS) is C-terminal arm.

It belongs to the beta/gamma-crystallin family. Homo/heterodimer, or complexes of higher-order. The structure of beta-crystallin oligomers seems to be stabilized through interactions between the N-terminal arms.

Functionally, crystallins are the dominant structural components of the vertebrate eye lens. The sequence is that of Beta-crystallin B3 (Crybb3) from Mus musculus (Mouse).